The sequence spans 306 residues: Pyridoxal 5'-phosphate synthase subunit PdxS (306 aa).

A D-ribose 5-phosphate-binding site is contributed by Asp-36. The Schiff-base intermediate with D-ribose 5-phosphate role is filled by Lys-93. Gly-165 is a binding site for D-ribose 5-phosphate. Arg-177 provides a ligand contact to D-glyceraldehyde 3-phosphate. Residues Gly-226 and 247–248 contribute to the D-ribose 5-phosphate site; that span reads GS.

It belongs to the PdxS/SNZ family. In terms of assembly, in the presence of PdxT, forms a dodecamer of heterodimers.

It catalyses the reaction aldehydo-D-ribose 5-phosphate + D-glyceraldehyde 3-phosphate + L-glutamine = pyridoxal 5'-phosphate + L-glutamate + phosphate + 3 H2O + H(+). The protein operates within cofactor biosynthesis; pyridoxal 5'-phosphate biosynthesis. Functionally, catalyzes the formation of pyridoxal 5'-phosphate from ribose 5-phosphate (RBP), glyceraldehyde 3-phosphate (G3P) and ammonia. The ammonia is provided by the PdxT subunit. Can also use ribulose 5-phosphate and dihydroxyacetone phosphate as substrates, resulting from enzyme-catalyzed isomerization of RBP and G3P, respectively. This Salinispora tropica (strain ATCC BAA-916 / DSM 44818 / JCM 13857 / NBRC 105044 / CNB-440) protein is Pyridoxal 5'-phosphate synthase subunit PdxS.